The following is a 121-amino-acid chain: Ribosome-binding factor A (121 aa).

This sequence belongs to the RbfA family. Monomer. Binds 30S ribosomal subunits, but not 50S ribosomal subunits or 70S ribosomes.

It localises to the cytoplasm. In terms of biological role, one of several proteins that assist in the late maturation steps of the functional core of the 30S ribosomal subunit. Associates with free 30S ribosomal subunits (but not with 30S subunits that are part of 70S ribosomes or polysomes). Required for efficient processing of 16S rRNA. May interact with the 5'-terminal helix region of 16S rRNA. This chain is Ribosome-binding factor A, found in Clostridium tetani (strain Massachusetts / E88).